A 90-amino-acid chain; its full sequence is Barrier-to-autointegration factor-like protein (90 aa).

The protein belongs to the BAF family. In terms of assembly, homodimer. Heterodimerizes with BANF1. Expressed strongly in testis and pancreas. Also detected in brain, colon, liver, lung, ovary, placenta, prostate, small intestine, spleen and thymus. Not detected in heart, kidney and skeletal muscle.

The protein resides in the nucleus. The protein localises to the cytoplasm. Its function is as follows. May play a role in BANF1 regulation and influence tissue-specific roles of BANF1. This is Barrier-to-autointegration factor-like protein (BANF2) from Homo sapiens (Human).